The chain runs to 601 residues: Sestrin homolog (601 aa).

Residues 1–11 (MISMGMTSKGQ) show a composition bias toward polar residues. The interval 1–58 (MISMGMTSKGQNVDGAPAGNSSSEWIISSSSSPFQANKRYSLDPPFGSDYSPPASPQN) is disordered. The N-linked (GlcNAc...) asparagine glycan is linked to Asn-20. Over residues 21-32 (SSSEWIISSSSS) the composition is skewed to low complexity. 2 N-linked (GlcNAc...) asparagine glycosylation sites follow: Asn-322 and Asn-330. Residues 355-425 (RRSQQQDDDD…DSSSSTLSQS (71 aa)) form a disordered region. A compositionally biased stretch (basic and acidic residues) spans 368 to 379 (LHDRQQDFHNAG). A compositionally biased stretch (low complexity) spans 380–425 (DDSQSSNNNTTTTTTTTTTTTTTTNTNTTSNSAGGGDSSSSTLSQS). Asn-387, Asn-388, Asn-406, Asn-438, and Asn-499 each carry an N-linked (GlcNAc...) asparagine glycan.

The protein belongs to the sestrin family.

The protein localises to the nucleus. The protein resides in the cytoplasm. May function as a negative feedback regulator of TOR function. This chain is Sestrin homolog, found in Dictyostelium discoideum (Social amoeba).